Consider the following 248-residue polypeptide: 4-hydroxy-tetrahydrodipicolinate reductase (248 aa).

Residues 9 to 14, 77 to 79, and 104 to 107 each bind NAD(+); these read GAKGRV, GTT, and APNF. Catalysis depends on His134, which acts as the Proton donor/acceptor. Residue His135 coordinates (S)-2,3,4,5-tetrahydrodipicolinate. Lys138 (proton donor) is an active-site residue. 144–145 lines the (S)-2,3,4,5-tetrahydrodipicolinate pocket; that stretch reads GT.

It belongs to the DapB family.

Its subcellular location is the cytoplasm. It carries out the reaction (S)-2,3,4,5-tetrahydrodipicolinate + NAD(+) + H2O = (2S,4S)-4-hydroxy-2,3,4,5-tetrahydrodipicolinate + NADH + H(+). The catalysed reaction is (S)-2,3,4,5-tetrahydrodipicolinate + NADP(+) + H2O = (2S,4S)-4-hydroxy-2,3,4,5-tetrahydrodipicolinate + NADPH + H(+). Its pathway is amino-acid biosynthesis; L-lysine biosynthesis via DAP pathway; (S)-tetrahydrodipicolinate from L-aspartate: step 4/4. Its function is as follows. Catalyzes the conversion of 4-hydroxy-tetrahydrodipicolinate (HTPA) to tetrahydrodipicolinate. This Corynebacterium aurimucosum (strain ATCC 700975 / DSM 44827 / CIP 107346 / CN-1) (Corynebacterium nigricans) protein is 4-hydroxy-tetrahydrodipicolinate reductase.